We begin with the raw amino-acid sequence, 609 residues long: uncharacterized protein (609 aa).

Belongs to the NodU/CmcH family.

This is an uncharacterized protein from Methanocaldococcus jannaschii (strain ATCC 43067 / DSM 2661 / JAL-1 / JCM 10045 / NBRC 100440) (Methanococcus jannaschii).